A 337-amino-acid chain; its full sequence is 1-aminocyclopropane-1-carboxylate deaminase (337 aa).

Residue Lys50 is modified to N6-(pyridoxal phosphate)lysine. Ser77 acts as the Nucleophile in catalysis.

Belongs to the ACC deaminase/D-cysteine desulfhydrase family. In terms of assembly, homotrimer. The cofactor is pyridoxal 5'-phosphate.

The enzyme catalyses 1-aminocyclopropane-1-carboxylate + H2O = 2-oxobutanoate + NH4(+). Its function is as follows. Catalyzes a cyclopropane ring-opening reaction, the irreversible conversion of 1-aminocyclopropane-1-carboxylate (ACC) to ammonia and alpha-ketobutyrate. Allows growth on ACC as a nitrogen source. This Methylobacterium sp. (strain 4-46) protein is 1-aminocyclopropane-1-carboxylate deaminase.